Reading from the N-terminus, the 292-residue chain is Chronophin (292 aa).

Catalysis depends on Asp25, which acts as the Nucleophile. Mg(2+)-binding residues include Asp25 and Asp27. The active-site Proton donor is the Asp27. Residues 58-60 (SNN), His178, and Lys209 each bind substrate. Asp234 provides a ligand contact to Mg(2+).

The protein belongs to the HAD-like hydrolase superfamily. In terms of assembly, homodimer. Mg(2+) serves as cofactor. Ubiquitous. highly expressed in brain (at protein level).

It localises to the cytoplasm. Its subcellular location is the cytosol. The protein resides in the cytoskeleton. The protein localises to the cell projection. It is found in the ruffle membrane. It localises to the lamellipodium membrane. Its subcellular location is the cell membrane. It carries out the reaction pyridoxal 5'-phosphate + H2O = pyridoxal + phosphate. The enzyme catalyses pyridoxine 5'-phosphate + H2O = pyridoxine + phosphate. It catalyses the reaction pyridoxamine + phosphate = pyridoxamine 5'-phosphate + H2O. The catalysed reaction is O-phospho-L-seryl-[protein] + H2O = L-seryl-[protein] + phosphate. With respect to regulation, inhibited by beryllium trifluoride. Functions as a pyridoxal phosphate (PLP) phosphatase, which also catalyzes the dephosphorylation of pyridoxine 5'-phosphate (PNP) and pyridoxamine 5'-phosphate (PMP), with order of substrate preference PLP &gt; PNP &gt; PMP and therefore plays a role in vitamin B6 metabolism. Also functions as a protein serine phosphatase that specifically dephosphorylates 'Ser-3' in proteins of the actin-depolymerizing factor (ADF)/cofilin family like CFL1 and DSTN. Thereby, regulates cofilin-dependent actin cytoskeleton reorganization, being required for normal progress through mitosis and normal cytokinesis. Does not dephosphorylate phosphothreonines in LIMK1. Does not dephosphorylate peptides containing phosphotyrosine. This Mus musculus (Mouse) protein is Chronophin.